The chain runs to 255 residues: 3-dehydroquinate dehydratase (255 aa).

Residues 47–49 and R83 contribute to the 3-dehydroquinate site; that span reads EWR. H144 acts as the Proton donor/acceptor in catalysis. K171 acts as the Schiff-base intermediate with substrate in catalysis. The 3-dehydroquinate site is built by R214, S233, and Q237.

It belongs to the type-I 3-dehydroquinase family. As to quaternary structure, homodimer or homotetramer.

It carries out the reaction 3-dehydroquinate = 3-dehydroshikimate + H2O. The protein operates within metabolic intermediate biosynthesis; chorismate biosynthesis; chorismate from D-erythrose 4-phosphate and phosphoenolpyruvate: step 3/7. Its function is as follows. Involved in the third step of the chorismate pathway, which leads to the biosynthesis of aromatic amino acids. Catalyzes the cis-dehydration of 3-dehydroquinate (DHQ) and introduces the first double bond of the aromatic ring to yield 3-dehydroshikimate. The reaction involves the formation of an imine intermediate between the keto group of 3-dehydroquinate and the epsilon-amino group of Lys-170 at the active site. The polypeptide is 3-dehydroquinate dehydratase (Clostridioides difficile (strain 630) (Peptoclostridium difficile)).